Here is a 526-residue protein sequence, read N- to C-terminus: Glucose-6-phosphate isomerase (526 aa).

Catalysis depends on E323, which acts as the Proton donor. Active-site residues include H352 and K454.

It belongs to the GPI family.

The protein resides in the cytoplasm. It carries out the reaction alpha-D-glucose 6-phosphate = beta-D-fructose 6-phosphate. Its pathway is carbohydrate biosynthesis; gluconeogenesis. It functions in the pathway carbohydrate degradation; glycolysis; D-glyceraldehyde 3-phosphate and glycerone phosphate from D-glucose: step 2/4. Its function is as follows. Catalyzes the reversible isomerization of glucose-6-phosphate to fructose-6-phosphate. The polypeptide is Glucose-6-phosphate isomerase (Prochlorococcus marinus subsp. pastoris (strain CCMP1986 / NIES-2087 / MED4)).